The following is a 205-amino-acid chain: Methylthioribulose-1-phosphate dehydratase (205 aa).

The Zn(2+) site is built by H96 and H98.

It belongs to the aldolase class II family. MtnB subfamily. It depends on Zn(2+) as a cofactor.

The catalysed reaction is 5-(methylsulfanyl)-D-ribulose 1-phosphate = 5-methylsulfanyl-2,3-dioxopentyl phosphate + H2O. Its pathway is amino-acid biosynthesis; L-methionine biosynthesis via salvage pathway; L-methionine from S-methyl-5-thio-alpha-D-ribose 1-phosphate: step 2/6. In terms of biological role, catalyzes the dehydration of methylthioribulose-1-phosphate (MTRu-1-P) into 2,3-diketo-5-methylthiopentyl-1-phosphate (DK-MTP-1-P). The polypeptide is Methylthioribulose-1-phosphate dehydratase (Pseudomonas aeruginosa (strain LESB58)).